A 323-amino-acid chain; its full sequence is tRNA U34 carboxymethyltransferase (323 aa).

Residues Lys-91, Trp-105, Lys-110, Gly-130, 181–182 (IE), Met-196, Tyr-200, and Arg-315 contribute to the carboxy-S-adenosyl-L-methionine site.

It belongs to the class I-like SAM-binding methyltransferase superfamily. CmoB family. In terms of assembly, homotetramer.

It catalyses the reaction carboxy-S-adenosyl-L-methionine + 5-hydroxyuridine(34) in tRNA = 5-carboxymethoxyuridine(34) in tRNA + S-adenosyl-L-homocysteine + H(+). Functionally, catalyzes carboxymethyl transfer from carboxy-S-adenosyl-L-methionine (Cx-SAM) to 5-hydroxyuridine (ho5U) to form 5-carboxymethoxyuridine (cmo5U) at position 34 in tRNAs. The chain is tRNA U34 carboxymethyltransferase from Enterobacter sp. (strain 638).